A 68-amino-acid polypeptide reads, in one-letter code: Large ribosomal subunit protein bL33c (68 aa).

The protein belongs to the bacterial ribosomal protein bL33 family.

It localises to the plastid. It is found in the chloroplast. In Nymphaea alba (White water-lily), this protein is Large ribosomal subunit protein bL33c.